The sequence spans 214 residues: Fruiting body protein SC14 (214 aa).

An N-terminal signal peptide occupies residues 1–18 (MKLNIAILLAALAATASA). N-linked (GlcNAc...) asparagine glycosylation is found at Asn-61 and Asn-144. The 124-residue stretch at 72-195 (LTAHNDERAQ…KSLWYYVCNY (124 aa)) folds into the SCP domain.

This sequence belongs to the CRISP family.

The protein localises to the secreted. This chain is Fruiting body protein SC14 (SC14), found in Schizophyllum commune (Split gill fungus).